Consider the following 60-residue polypeptide: Large ribosomal subunit protein bL32 (60 aa).

Over residues 1 to 23 the composition is skewed to basic residues; it reads MAKHPVPKKKTSKSKRDMRRSHH. The tract at residues 1–34 is disordered; that stretch reads MAKHPVPKKKTSKSKRDMRRSHHALTAPNLTECP. C33, C36, C46, and C49 together coordinate Zn(2+). The C4-type zinc-finger motif lies at 33–49; the sequence is CPQCHGKKLSHHICPNC.

The protein belongs to the bacterial ribosomal protein bL32 family. Part of the 50S ribosomal subunit. Contacts proteins L17 and L22. Zn(2+) serves as cofactor.

Its function is as follows. Forms a cluster with L17 and L22, and with L22, a pair of 'tweezers' that hold together all the domains of the 23S rRNA. Interacts with the antibiotic troleandomycin which blocks the peptide exit tunnel. In Deinococcus radiodurans (strain ATCC 13939 / DSM 20539 / JCM 16871 / CCUG 27074 / LMG 4051 / NBRC 15346 / NCIMB 9279 / VKM B-1422 / R1), this protein is Large ribosomal subunit protein bL32 (rpmF).